Consider the following 259-residue polypeptide: Putative zinc metalloprotease Rip2 (259 aa).

2 helical membrane passes run 14-34 (PIFLGLLGLTAVGGALAWLAG) and 39-59 (PLAYAGVFVMVIAGWLVSLCL). Zn(2+) is bound at residue His60. Residue Glu61 is part of the active site. His64 contributes to the Zn(2+) binding site. 4 helical membrane passes run 97 to 117 (GLPMLFIALGGIGLPGAAVYV), 128 to 148 (TLVSLAGPTVNLALAMLLLAA), 156 to 176 (IHAVLWAGVAFLAFLQLTALV), and 211 to 231 (LVFLLVLFLAPTLNGWFFGVV).

Belongs to the peptidase M50B family. Requires Zn(2+) as cofactor.

The protein resides in the cell membrane. The chain is Putative zinc metalloprotease Rip2 (rip2) from Mycobacterium tuberculosis (strain ATCC 25618 / H37Rv).